Here is a 496-residue protein sequence, read N- to C-terminus: Aspartyl/glutamyl-tRNA(Asn/Gln) amidotransferase subunit B (496 aa).

Belongs to the GatB/GatE family. GatB subfamily. Heterotrimer of A, B and C subunits.

It catalyses the reaction L-glutamyl-tRNA(Gln) + L-glutamine + ATP + H2O = L-glutaminyl-tRNA(Gln) + L-glutamate + ADP + phosphate + H(+). It carries out the reaction L-aspartyl-tRNA(Asn) + L-glutamine + ATP + H2O = L-asparaginyl-tRNA(Asn) + L-glutamate + ADP + phosphate + 2 H(+). Allows the formation of correctly charged Asn-tRNA(Asn) or Gln-tRNA(Gln) through the transamidation of misacylated Asp-tRNA(Asn) or Glu-tRNA(Gln) in organisms which lack either or both of asparaginyl-tRNA or glutaminyl-tRNA synthetases. The reaction takes place in the presence of glutamine and ATP through an activated phospho-Asp-tRNA(Asn) or phospho-Glu-tRNA(Gln). In Prochlorococcus marinus (strain MIT 9303), this protein is Aspartyl/glutamyl-tRNA(Asn/Gln) amidotransferase subunit B.